The sequence spans 388 residues: 5-hydroxytryptamine receptor 1B (388 aa).

The interval 1–29 is disordered; that stretch reads MEQPSRLCSPPASGSLTSSQTNHSTFPNP. Topologically, residues 1–45 are extracellular; the sequence is MEQPSRLCSPPASGSLTSSQTNHSTFPNPNCSAPDLEPYQDSIAL. Over residues 12 to 29 the composition is skewed to polar residues; sequence ASGSLTSSQTNHSTFPNP. 2 N-linked (GlcNAc...) asparagine glycosylation sites follow: asparagine 22 and asparagine 30. Residues 46–71 form a helical membrane-spanning segment; that stretch reads PWKVLLATFLGLITLGTTLSNAFVIA. Residues 72–85 are Cytoplasmic-facing; the sequence is TVSRTRKLHTPANY. The helical transmembrane segment at 86 to 110 threads the bilayer; sequence LIASLAVTDLLVSILVMPISTMYTV. Residues 111-118 are Extracellular-facing; it reads TGRWTLGQ. The helical transmembrane segment at 119–144 threads the bilayer; that stretch reads VVCDFWLSSDITCCTASILHLCVIAL. A disulfide bond links cysteine 121 and cysteine 197. Ergotamine contacts are provided by aspartate 128 and threonine 133. Positions 145-147 match the DRY motif; important for ligand-induced conformation changes and signaling motif; sequence DRY. Residues 145–164 are Cytoplasmic-facing; sequence DRYWAITDAVEYSAKRTPKR. The helical transmembrane segment at 165–183 threads the bilayer; that stretch reads AAGMIIMVWVFSVSISMPP. The Extracellular portion of the chain corresponds to 184–203; that stretch reads LFWRQAKAEEVADCSVNTDH. Valine 199 is a binding site for ergotamine. A helical membrane pass occupies residues 204–227; that stretch reads ILYTVYSTVGAFYFPTLLLIALYG. Residues 228–313 lie on the Cytoplasmic side of the membrane; it reads RIYVEARSRI…AARERKATRT (86 aa). The disordered stretch occupies residues 249 to 282; that stretch reads LTRAQLITDSPGSSSSGTSINSRAPEGPSESGSP. A compositionally biased stretch (low complexity) spans 255 to 270; that stretch reads ITDSPGSSSSGTSINS. The helical transmembrane segment at 314 to 335 threads the bilayer; sequence LGIILGAFIVCWLPFFIISLAL. Topologically, residues 336–345 are extracellular; sequence PICDDACWFH. Residues 346 to 368 traverse the membrane as a helical segment; it reads LAIFDFFNWLGYLNSLINPIIYT. An NPxxY motif; important for ligand-induced conformation changes and signaling motif is present at residues 363–367; sequence NPIIY. The Cytoplasmic segment spans residues 369-388; that stretch reads KSNDDFKQAFQKLMRFRRTS.

The protein belongs to the G-protein coupled receptor 1 family. Homodimer. Heterodimer with HTR1D. Phosphorylated. Desensitization of the receptor may be mediated by its phosphorylation. Post-translationally, palmitoylated.

The protein resides in the cell membrane. Its function is as follows. G-protein coupled receptor for 5-hydroxytryptamine (serotonin). Also functions as a receptor for ergot alkaloid derivatives, various anxiolytic and antidepressant drugs and other psychoactive substances, such as lysergic acid diethylamide (LSD). Ligand binding causes a conformation change that triggers signaling via guanine nucleotide-binding proteins (G proteins) and modulates the activity of downstream effectors, such as adenylate cyclase. HTR1B is coupled to G(i)/G(o) G alpha proteins and mediates inhibitory neurotransmission by inhibiting adenylate cyclase activity. Arrestin family members inhibit signaling via G proteins and mediate activation of alternative signaling pathways. Regulates the release of 5-hydroxytryptamine, dopamine and acetylcholine in the brain, and thereby affects neural activity, nociceptive processing, pain perception, mood and behavior. Besides, plays a role in vasoconstriction of cerebral arteries. This is 5-hydroxytryptamine receptor 1B (HTR1B) from Didelphis virginiana (North American opossum).